We begin with the raw amino-acid sequence, 118 residues long: Large ribosomal subunit protein uL18 (118 aa).

The segment covering 1-10 has biased composition (basic and acidic residues); it reads MKTTRRDATR. Residues 1–20 form a disordered region; that stretch reads MKTTRRDATRSRHQRVRRKV. The span at 11–20 shows a compositional bias: basic residues; that stretch reads SRHQRVRRKV.

This sequence belongs to the universal ribosomal protein uL18 family. Part of the 50S ribosomal subunit; part of the 5S rRNA/L5/L18/L25 subcomplex. Contacts the 5S and 23S rRNAs.

Its function is as follows. This is one of the proteins that bind and probably mediate the attachment of the 5S RNA into the large ribosomal subunit, where it forms part of the central protuberance. The chain is Large ribosomal subunit protein uL18 from Acaryochloris marina (strain MBIC 11017).